A 430-amino-acid chain; its full sequence is Small ribosomal subunit protein uS5m (430 aa).

A disordered region spans residues Ala-108 to Arg-128. Residues Arg-111 to Asp-125 are compositionally biased toward basic residues. In terms of domain architecture, S5 DRBM spans Phe-218–Ile-282.

This sequence belongs to the universal ribosomal protein uS5 family. In terms of assembly, component of the mitochondrial ribosome small subunit (28S) which comprises a 12S rRNA and about 30 distinct proteins.

It is found in the mitochondrion. In Bos taurus (Bovine), this protein is Small ribosomal subunit protein uS5m (MRPS5).